We begin with the raw amino-acid sequence, 156 residues long: Large ribosomal subunit protein uL15 (156 aa).

The tract at residues 25–48 (RGIGCGKGKTSGRGHKGQKARSGV) is disordered. Positions 34–43 (TSGRGHKGQK) are enriched in basic residues.

Belongs to the universal ribosomal protein uL15 family. Part of the 50S ribosomal subunit.

Functionally, binds to the 23S rRNA. This chain is Large ribosomal subunit protein uL15, found in Wolbachia pipientis wMel.